The primary structure comprises 428 residues: tRNA(Ile)-lysidine synthase (428 aa).

28–33 (SGGVDS) is a binding site for ATP.

It belongs to the tRNA(Ile)-lysidine synthase family.

It localises to the cytoplasm. The enzyme catalyses cytidine(34) in tRNA(Ile2) + L-lysine + ATP = lysidine(34) in tRNA(Ile2) + AMP + diphosphate + H(+). Ligates lysine onto the cytidine present at position 34 of the AUA codon-specific tRNA(Ile) that contains the anticodon CAU, in an ATP-dependent manner. Cytidine is converted to lysidine, thus changing the amino acid specificity of the tRNA from methionine to isoleucine. This chain is tRNA(Ile)-lysidine synthase, found in Streptococcus pyogenes serotype M18 (strain MGAS8232).